The chain runs to 245 residues: Proteolipid protein DM alpha (245 aa).

The next 4 membrane-spanning stretches (helical) occupy residues 19 to 35, 71 to 87, 117 to 133, and 204 to 220; these read LIAT…FCGC, IIYG…VLLL, FIFL…GVFA, and LFIA…IALL.

The protein belongs to the myelin proteolipid protein family. Highly expressed in white matter in myelinating shark brain.

The protein localises to the membrane. The sequence is that of Proteolipid protein DM alpha from Squalus acanthias (Spiny dogfish).